The chain runs to 247 residues: Fasciclin-like arabinogalactan protein 6 (247 aa).

An N-terminal signal peptide occupies residues 1-23 (MSSSLFSYVVLLIFLFTIPYIQS). One can recognise an FAS1 domain in the interval 36-182 (PINLTAILEA…LAVYVVDSVL (147 aa)). N-linked (GlcNAc...) asparagine glycans are attached at residues asparagine 38, asparagine 57, asparagine 70, asparagine 142, and asparagine 153. The span at 192–212 (TTPTGAPAPKSSTSSSDADSP) shows a compositional bias: low complexity. A disordered region spans residues 192 to 221 (TTPTGAPAPKSSTSSSDADSPAADDEHKSA). Glycine 222 is lipidated: GPI-anchor amidated glycine. Positions 223-247 (SSVKRTSLGIVVSFALFCCSVIYIA) are cleaved as a propeptide — removed in mature form.

This sequence belongs to the fasciclin-like AGP family.

It localises to the cell membrane. Its function is as follows. May be a cell surface adhesion protein. This is Fasciclin-like arabinogalactan protein 6 (FLA6) from Arabidopsis thaliana (Mouse-ear cress).